Reading from the N-terminus, the 452-residue chain is tRNA modification GTPase MnmE (452 aa).

The (6S)-5-formyl-5,6,7,8-tetrahydrofolate site is built by arginine 22, glutamate 80, and lysine 119. In terms of domain architecture, TrmE-type G spans glycine 213 to phenylalanine 375. Residue asparagine 223 coordinates K(+). GTP contacts are provided by residues asparagine 223–threonine 228, threonine 242–threonine 248, and aspartate 267–glycine 270. Position 227 (serine 227) interacts with Mg(2+). K(+)-binding residues include threonine 242, isoleucine 244, and threonine 247. Residue threonine 248 coordinates Mg(2+). Lysine 452 provides a ligand contact to (6S)-5-formyl-5,6,7,8-tetrahydrofolate.

This sequence belongs to the TRAFAC class TrmE-Era-EngA-EngB-Septin-like GTPase superfamily. TrmE GTPase family. In terms of assembly, homodimer. Heterotetramer of two MnmE and two MnmG subunits. It depends on K(+) as a cofactor.

It localises to the cytoplasm. Functionally, exhibits a very high intrinsic GTPase hydrolysis rate. Involved in the addition of a carboxymethylaminomethyl (cmnm) group at the wobble position (U34) of certain tRNAs, forming tRNA-cmnm(5)s(2)U34. The protein is tRNA modification GTPase MnmE of Petrotoga mobilis (strain DSM 10674 / SJ95).